The primary structure comprises 199 residues: Small ribosomal subunit protein uS4 (199 aa).

The S4 RNA-binding domain maps to 94-157 (SRLDNLVYRA…RKLKLVQEAL (64 aa)).

Belongs to the universal ribosomal protein uS4 family. As to quaternary structure, part of the 30S ribosomal subunit. Contacts protein S5. The interaction surface between S4 and S5 is involved in control of translational fidelity.

Its function is as follows. One of the primary rRNA binding proteins, it binds directly to 16S rRNA where it nucleates assembly of the body of the 30S subunit. With S5 and S12 plays an important role in translational accuracy. This is Small ribosomal subunit protein uS4 from Mycoplasmopsis synoviae (strain 53) (Mycoplasma synoviae).